The sequence spans 199 residues: Recombination protein RecR (199 aa).

Residues 57 to 72 (CQSCRTYTEETLCPIC) form a C4-type zinc finger. Residues 81–176 (STICVVETPA…MISRIAHGVP (96 aa)) form the Toprim domain.

Belongs to the RecR family.

Its function is as follows. May play a role in DNA repair. It seems to be involved in an RecBC-independent recombinational process of DNA repair. It may act with RecF and RecO. This is Recombination protein RecR from Shewanella baltica (strain OS195).